The following is a 353-amino-acid chain: Photosystem II protein D1 (353 aa).

T2 carries the post-translational modification N-acetylthreonine. T2 carries the phosphothreonine modification. A run of 3 helical transmembrane segments spans residues 29 to 46, 118 to 133, and 142 to 156; these read YIGWFGVLMIPTLLTATS, HFLLGVACYMGREWEL, and WIAVAYSAPVAAATA. H118 is a chlorophyll a binding site. Residue Y126 participates in pheophytin a binding. [CaMn4O5] cluster contacts are provided by D170 and E189. A helical membrane pass occupies residues 197 to 218; it reads FHMLGVAGVFGGSLFSAMHGSL. H198 serves as a coordination point for chlorophyll a. A quinone contacts are provided by residues H215 and 264-265; that span reads SF. H215 is a binding site for Fe cation. H272 contributes to the Fe cation binding site. Residues 274–288 traverse the membrane as a helical segment; sequence FLAAWPVVGIWFTAL. The [CaMn4O5] cluster site is built by H332, E333, D342, and A344. Residues 345 to 353 constitute a propeptide that is removed on maturation; it reads SVELDSIDG.

Belongs to the reaction center PufL/M/PsbA/D family. As to quaternary structure, PSII is composed of 1 copy each of membrane proteins PsbA, PsbB, PsbC, PsbD, PsbE, PsbF, PsbH, PsbI, PsbJ, PsbK, PsbL, PsbM, PsbT, PsbX, PsbY, PsbZ, Psb30/Ycf12, at least 3 peripheral proteins of the oxygen-evolving complex and a large number of cofactors. It forms dimeric complexes. The D1/D2 heterodimer binds P680, chlorophylls that are the primary electron donor of PSII, and subsequent electron acceptors. It shares a non-heme iron and each subunit binds pheophytin, quinone, additional chlorophylls, carotenoids and lipids. D1 provides most of the ligands for the Mn4-Ca-O5 cluster of the oxygen-evolving complex (OEC). There is also a Cl(-1) ion associated with D1 and D2, which is required for oxygen evolution. The PSII complex binds additional chlorophylls, carotenoids and specific lipids. serves as cofactor. Tyr-161 forms a radical intermediate that is referred to as redox-active TyrZ, YZ or Y-Z. Post-translationally, C-terminally processed by CTPA; processing is essential to allow assembly of the oxygen-evolving complex and thus photosynthetic growth.

The protein localises to the plastid. The protein resides in the chloroplast thylakoid membrane. It catalyses the reaction 2 a plastoquinone + 4 hnu + 2 H2O = 2 a plastoquinol + O2. Its function is as follows. Photosystem II (PSII) is a light-driven water:plastoquinone oxidoreductase that uses light energy to abstract electrons from H(2)O, generating O(2) and a proton gradient subsequently used for ATP formation. It consists of a core antenna complex that captures photons, and an electron transfer chain that converts photonic excitation into a charge separation. The D1/D2 (PsbA/PsbD) reaction center heterodimer binds P680, the primary electron donor of PSII as well as several subsequent electron acceptors. The protein is Photosystem II protein D1 of Gnetum parvifolium (Small-leaved jointfir).